A 369-amino-acid chain; its full sequence is uncharacterized protein (369 aa).

This is an uncharacterized protein from Archaeoglobus fulgidus (strain ATCC 49558 / DSM 4304 / JCM 9628 / NBRC 100126 / VC-16).